Here is a 920-residue protein sequence, read N- to C-terminus: Rho guanine nucleotide exchange factor 1 (920 aa).

In terms of domain architecture, RGSL spans 39-230 (DQNSQFQSLE…SLYMRHLGVR (192 aa)). The segment at 231-404 (TKSGDKKSGR…PGWRELVPPD (174 aa)) is disordered. Residues 281-311 (DCRHLKVEADAEKPGPADRKGGLGMSSRDRT) show a composition bias toward basic and acidic residues. Residues 364–380 (STEDNGETESPEPGDDG) are compositionally biased toward acidic residues. Ser-373, Gly-386, Glu-390, Ser-408, and Ser-412 each carry phosphoserine. The DH domain maps to 415-604 (KRQEVISELL…REILHHVNQA (190 aa)). Phosphothreonine is present on residues Arg-432 and Thr-694. Residues 646–759 (KLVHEGPLTW…WCNLITETAG (114 aa)) form the PH domain. Position 737 is a phosphotyrosine; by JAK2 (Tyr-737). Disordered regions lie at residues 764–797 (PAPA…AEMA) and 840–864 (TEED…PGPV). The stretch at 865-894 (HTQEIEENLLSLEVAIRQLEELEEEFCRLR) forms a coiled coil. Residue Ser-905 is modified to Phosphoserine.

In terms of assembly, interacts with RHOA, GNA12 and GNA13. Homooligomerizes through the coiled coil region. Interacts with CTNNAL1. May interact with CCPG1. Post-translationally, phosphorylated by PKCA. Angiotensin-2 induced Tyr-737 phosphorylation is mediated by JAK2. Isoform 5 is phosphorylated at 'Ser-390'. Ubiquitously expressed.

The protein resides in the cytoplasm. The protein localises to the membrane. Its function is as follows. Seems to play a role in the regulation of RhoA GTPase by guanine nucleotide-binding alpha-12 (GNA12) and alpha-13 (GNA13) subunits. Acts as a GTPase-activating protein (GAP) for GNA12 and GNA13, and as guanine nucleotide exchange factor (GEF) for RhoA GTPase. Activated G alpha 13/GNA13 stimulates the RhoGEF activity through interaction with the RGS-like domain. This GEF activity is inhibited by binding to activated GNA12. Mediates angiotensin-2-induced RhoA activation. Isoform 3 and isoform 4 do not homooligomerize and show an enhanced RhoGEF activity. In lymphoid follicles, may trigger activation of GNA13 as part of S1PR2-dependent signaling pathway that leads to inhibition of germinal center (GC) B cell growth and migration outside the GC niche. The chain is Rho guanine nucleotide exchange factor 1 (Arhgef1) from Mus musculus (Mouse).